The following is a 345-amino-acid chain: MVTGEENVYLKSSLSILKELSLDELLNVQYDVTTLIAKRVQALQNRNKCVLEEPNSKLAEILCHEKNAPQQSSQTSAGPGEQDSEDFILTQFDEDIKKESAEVHYRNENKHTVQLPLVTMPPNRHKRKISEFSSPLNGLNNLSDLEDCSDTVIHEKDNDKENKTRKLLGIELENPESTSPNLYKNVKDNFLFDFNTNPLTKRAWILEDFRPNEDIAPVKRGRRKLERFYAQVGKPEDSKHRSLSVVIESQNSDYEFAFDNLRNRSKSPPGFGRLDFPSTQEGNEDKKKSQEIIRRKTKYRFLMASNNKIPPYEREYVFKREQLNQIVDDGCFFWSDKLLQIYARC.

Positions 21 to 172 are DNA-binding; it reads SLDELLNVQY…KTRKLLGIEL (152 aa). Ser-143 bears the Phosphoserine mark. A disordered region spans residues 265 to 290; that stretch reads SKSPPGFGRLDFPSTQEGNEDKKKSQ. Ser-267 is subject to Phosphoserine; by CDC28.

The protein belongs to the COM1/SAE2/CtIP family. In terms of assembly, dimer or multimer. Interacts with MRE11. Phosphorylated forms accumulate periodically during the unperturbed cell cycle and in response to DNA damage in G2. Phosphorylated by MEC1 and TEL1. Mutagenesis experiments showed that several of the 5 residues located in canonical (S/T)Q motifs, which are favored for phosphorylation by ATM/ATR kinases (Ser-73, Thr-90, Ser-249, Thr-279 and Ser-289) may be phosphorylated. Phosphorylated at Ser-267 by CDC28 which is required to initiate meiotic DSB resection by allowing SPO11 removal from DSB ends.

It localises to the cytoplasm. It is found in the nucleus. Endonuclease that cooperates with the MRX complex in processing meiotic and mitotic double-strand breaks by allowing the endonucleolytic removal of SPO11 from the break sites and ensuring both resection and intrachromosomal association of the broken ends. Required for proper recovery from checkpoint-mediated cell cycle arrest after DNA damage. MRX complex and SAE2 remove a small oligonucleotide(s) from the DNA ends to form an early intermediate which is rapidly processed by EXO1 and/or SGS1 to generate extensive tracts of single-stranded DNA that serve as substrate for RAD51. Plays a transitional role in the dissociation of MRE11 from, and the recruitment of RAD52 to, repair foci. Ensures that both ends of a DSB participate in a recombination event and impairs the formation of palindromic structures in the genome. With TEL1, promotes microhomology-mediated end joining (MMEJ) but inhibits non-homologous end joining (NHEJ), likely by regulating MRE11-dependent ssDNA accumulation at DNA break. SAE2 and MRX are particularly important for removal of hairpins, bulky adducts and other irregular end structures. Facilitates telomere length reequilibration and subsequent checkpoint switch off. Involved in homing efficiency of VMA1 intein VDE and in repair of transposon excision sites. This chain is DNA endonuclease SAE2 (SAE2), found in Saccharomyces cerevisiae (strain ATCC 204508 / S288c) (Baker's yeast).